Here is a 474-residue protein sequence, read N- to C-terminus: Cysteine--tRNA ligase (474 aa).

Residue C30 participates in Zn(2+) binding. Positions 32 to 42 match the 'HIGH' region motif; it reads PTVYNFAHIGN. The Zn(2+) site is built by C212, H237, and E241. The 'KMSKS' region motif lies at 270-274; the sequence is KMSKS. K273 provides a ligand contact to ATP.

This sequence belongs to the class-I aminoacyl-tRNA synthetase family. Monomer. The cofactor is Zn(2+).

The protein localises to the cytoplasm. It catalyses the reaction tRNA(Cys) + L-cysteine + ATP = L-cysteinyl-tRNA(Cys) + AMP + diphosphate. This chain is Cysteine--tRNA ligase, found in Leptospira borgpetersenii serovar Hardjo-bovis (strain JB197).